Consider the following 101-residue polypeptide: Large ribosomal subunit protein bL21 (101 aa).

This sequence belongs to the bacterial ribosomal protein bL21 family. In terms of assembly, part of the 50S ribosomal subunit. Contacts protein L20.

In terms of biological role, this protein binds to 23S rRNA in the presence of protein L20. The polypeptide is Large ribosomal subunit protein bL21 (Magnetococcus marinus (strain ATCC BAA-1437 / JCM 17883 / MC-1)).